Here is a 133-residue protein sequence, read N- to C-terminus: Small ribosomal subunit protein uS11 (133 aa).

Belongs to the universal ribosomal protein uS11 family. As to quaternary structure, part of the 30S ribosomal subunit.

Its function is as follows. Located on the platform of the 30S subunit. In Aeropyrum pernix (strain ATCC 700893 / DSM 11879 / JCM 9820 / NBRC 100138 / K1), this protein is Small ribosomal subunit protein uS11.